The primary structure comprises 275 residues: Transmembrane protein 45B (275 aa).

The next 7 helical transmembrane spans lie at 7 to 27 (HALPGSFFLIIGLCWSVKYPL), 47 to 67 (IVEAAIRTLFSVTGILAEQFV), 94 to 114 (LFFAVSGIVDMLTYLVSHVPL), 116 to 136 (VDRLVMAVAVFMEGFLFYYHV), 146 to 166 (IHSLLLYALFGGCVSISLEVI), 180 to 200 (LIILQGTWFWQIGFVLFPPFG), and 212 to 232 (LMFITMCFCWHYLAALSIVAV). Residues Ser-270 and Ser-272 each carry the phosphoserine modification.

Belongs to the TMEM45 family. (Microbial infection) Interacts with sindbis virus nsP1 and nsP4; these interactions lead to viral RNA replication inhibition. As to quaternary structure, (Microbial infection) Interacts with chikungunya virus nsP1 and nsP4; these interactions lead to viral RNA replication inhibition.

It localises to the endosome membrane. It is found in the lysosome membrane. Its subcellular location is the golgi apparatus. The protein resides in the trans-Golgi network membrane. Functionally, plays a role in innate immunity. Mechanistically, promotes alphaviruses RNA degradation by interacting with the viral polymerase nsP4 and the mRNA-capping enzyme nsP1 and thereby interfering with the interaction between viral RNA and nsP1. In Homo sapiens (Human), this protein is Transmembrane protein 45B (TMEM45B).